Consider the following 309-residue polypeptide: Spermatid maturation protein 1 (309 aa).

Residues 29–49 traverse the membrane as a helical segment; sequence VLLLLGLIICINISINIVTLL. A disordered region spans residues 209-231; that stretch reads PPPPSPEAPSHKNGGEGAVPEAE. Positions 259–285 form a coiled coil; it reads RIVYDARDMRRRLRELTREVEALSGCY.

It is found in the membrane. It localises to the cytoplasm. Its function is as follows. Required for proper cytoplasm removal during spermatogenesis. This is Spermatid maturation protein 1 (SPEM1) from Homo sapiens (Human).